The chain runs to 547 residues: Immunoglobulin epsilon heavy chain (547 aa).

Q1 is modified (pyrrolidone carboxylic acid). Ig-like domains follow at residues 1 to 120 (QVQL…TEVT), 130 to 223 (PSVF…KTFS), 232 to 329 (PTVK…KKCA), 333 to 437 (PRGV…TKTS), and 443 to 542 (PEVY…RAVS). Positions 1–124 (QVQLVQSGAE…EGTEVTYTVS (124 aa)) are variable (V) domain, involved in antigen recognition. Disulfide bonds link C22–C96, C139–C225, C153–C207, C254–C312, C358–C418, and C464–C524. The tract at residues 125 to 547 (GAWTLPSVFP…QRAVSVNPGK (423 aa)) is constant (C) domain. N-linked (GlcNAc...) asparagine glycans are attached at residues N145, N173, N219, N265, N371, N383, and N394.

Immunoglobulins are composed of two identical heavy chains and two identical light chains; disulfide-linked.

It localises to the secreted. The protein resides in the cell membrane. Functionally, immunoglobulins, also known as antibodies, are membrane-bound or secreted glycoproteins produced by B lymphocytes. In the recognition phase of humoral immunity, the membrane-bound immunoglobulins serve as receptors which, upon binding of a specific antigen, trigger the clonal expansion and differentiation of B lymphocytes into immunoglobulins-secreting plasma cells. Secreted immunoglobulins mediate the effector phase of humoral immunity, which results in the elimination of bound antigens. The antigen binding site is formed by the variable domain of one heavy chain, together with that of its associated light chain. Thus, each immunoglobulin has two antigen binding sites with remarkable affinity for a particular antigen. The variable domains are assembled by a process called V-(D)-J rearrangement and can then be subjected to somatic hypermutations which, after exposure to antigen and selection, allow affinity maturation for a particular antigen. The chain is Immunoglobulin epsilon heavy chain from Homo sapiens (Human).